Reading from the N-terminus, the 618-residue chain is Syncytin-B (618 aa).

Residues Met1–Ser17 form the signal peptide. Residues Tyr18–Arg545 are Extracellular-facing. Asn27 is a glycosylation site (N-linked (GlcNAc...) asparagine). The CXXC signature appears at Cys44 to Cys47. 3 disulfide bridges follow: Cys44–Cys47, Cys44–Cys507, and Cys499–Cys506. N-linked (GlcNAc...) asparagine glycosylation is found at Asn184, Asn274, and Asn357. The tract at residues Leu422–Leu442 is fusion peptide. The tract at residues Leu482–Thr498 is immunosuppression. Residues Cys499–Cys507 carry the CX6CC motif. Residues Trp546–Phe566 form a helical membrane-spanning segment. Residues Gly567 to Thr618 are Cytoplasmic-facing.

The protein belongs to the gamma type-C retroviral envelope protein family. As to quaternary structure, the mature protein consists of a trimer of SU-TM heterodimers. The SU-TM heterodimers are attached by a labile interchain disulfide bond. In terms of processing, synthesized as an inactive precursor that is heavily N-glycosylated and processed likely by furin in the Golgi to yield the mature SU and TM proteins. The cleavage site between SU and TM requires the minimal sequence [KR]-X-[KR]-R. Post-translationally, the CXXC motif is highly conserved across a broad range of retroviral envelope proteins. It is thought to participate in the formation of a labile disulfide bond possibly with the CX6CC motif present in the transmembrane protein. Isomerization of the intersubunit disulfide bond to an SU intrachain disulfide bond is thought to occur upon receptor recognition in order to allow membrane fusion. As to expression, highly expressed in placenta where it localizes to syncytiotrophoblasts of the labyrinthine zona. Specifically localizes to syncytiotrophoblast layer II (SynT-II). Also detected at very low levels in ovary.

It is found in the cell membrane. In terms of biological role, this endogenous retroviral envelope protein has retained its original fusogenic properties. Together with Syna, participates in trophoblast fusion and the formation of a syncytium during placenta morphogenesis. Synb is specifically involved in formation of syncytiotrophoblast layer II (SynT-II). Promotes myoblast fusion, and may play a role in regeneration of damaged muscle tissue in males. May have immunosuppressive activity. This chain is Syncytin-B, found in Mus musculus (Mouse).